The primary structure comprises 369 residues: Ubiquinone biosynthesis O-methyltransferase, mitochondrial (369 aa).

The transit peptide at 1-85 (MWSGRKLGSS…SFRYPWARLY (85 aa)) directs the protein to the mitochondrion. R124 is a binding site for S-adenosyl-L-methionine. N6-acetyllysine is present on residues K143 and K149. 2 residues coordinate S-adenosyl-L-methionine: G154 and D175. K196 carries the N6-acetyllysine modification. S222 is an S-adenosyl-L-methionine binding site. Mg(2+) is bound by residues E223, E226, and H227.

This sequence belongs to the class I-like SAM-binding methyltransferase superfamily. UbiG/COQ3 family. Component of a multi-subunit COQ enzyme complex, composed of at least COQ3, COQ4, COQ5, COQ6, COQ7 and COQ9. Mg(2+) is required as a cofactor.

Its subcellular location is the mitochondrion inner membrane. The enzyme catalyses 3,4-dihydroxy-5-(all-trans-decaprenyl)benzoate + S-adenosyl-L-methionine = 4-hydroxy-3-methoxy-5-(all-trans-decaprenyl)benzoate + S-adenosyl-L-homocysteine + H(+). The catalysed reaction is a 3-demethylubiquinone + S-adenosyl-L-methionine = a ubiquinone + S-adenosyl-L-homocysteine. It catalyses the reaction 3-demethylubiquinol-10 + S-adenosyl-L-methionine = ubiquinol-10 + S-adenosyl-L-homocysteine + H(+). It functions in the pathway cofactor biosynthesis; ubiquinone biosynthesis. Functionally, O-methyltransferase required for two non-consecutive steps during ubiquinone biosynthesis. Catalyzes the 2 O-methylation of 3,4-dihydroxy-5-(all-trans-decaprenyl)benzoic acid into 4-hydroxy-3-methoxy-5-(all-trans-decaprenyl)benzoic acid. Also catalyzes the last step of ubiquinone biosynthesis by mediating methylation of 3-demethylubiquinone into ubiquinone. Also able to mediate the methylation of 3-demethylubiquinol-10 into ubiquinol-10. This chain is Ubiquinone biosynthesis O-methyltransferase, mitochondrial, found in Homo sapiens (Human).